The chain runs to 430 residues: 4-hydroxy-3-methylbut-2-en-1-yl diphosphate synthase (flavodoxin) (430 aa).

Positions 310, 313, 356, and 363 each coordinate [4Fe-4S] cluster.

It belongs to the IspG family. [4Fe-4S] cluster is required as a cofactor.

It catalyses the reaction (2E)-4-hydroxy-3-methylbut-2-enyl diphosphate + oxidized [flavodoxin] + H2O + 2 H(+) = 2-C-methyl-D-erythritol 2,4-cyclic diphosphate + reduced [flavodoxin]. Its pathway is isoprenoid biosynthesis; isopentenyl diphosphate biosynthesis via DXP pathway; isopentenyl diphosphate from 1-deoxy-D-xylulose 5-phosphate: step 5/6. In terms of biological role, converts 2C-methyl-D-erythritol 2,4-cyclodiphosphate (ME-2,4cPP) into 1-hydroxy-2-methyl-2-(E)-butenyl 4-diphosphate. The sequence is that of 4-hydroxy-3-methylbut-2-en-1-yl diphosphate synthase (flavodoxin) from Nitrobacter winogradskyi (strain ATCC 25391 / DSM 10237 / CIP 104748 / NCIMB 11846 / Nb-255).